Consider the following 504-residue polypeptide: L-carnitine/gamma-butyrobetaine antiporter (504 aa).

The next 12 helical transmembrane spans lie at 10–30 (IEPK…WLTV), 51–71 (WGWA…WLVF), 92–112 (IFMM…SIEI), 143–163 (GPLP…FFFV), 195–215 (FYLV…TPLV), 231–251 (LDAI…ACGL), 263–283 (SYLS…SFIM), 316–336 (WTVF…IFLA), 347–367 (LCFG…TVLG), 398–418 (WAAL…CFIA), 446–466 (LLVR…LLAL), and 475–495 (AIIA…LSFI).

The protein belongs to the BCCT transporter (TC 2.A.15) family. CaiT subfamily. In terms of assembly, homotrimer.

It is found in the cell inner membrane. The catalysed reaction is 4-(trimethylamino)butanoate(in) + (R)-carnitine(out) = 4-(trimethylamino)butanoate(out) + (R)-carnitine(in). The protein operates within amine and polyamine metabolism; carnitine metabolism. In terms of biological role, catalyzes the exchange of L-carnitine for gamma-butyrobetaine. This Escherichia coli O8 (strain IAI1) protein is L-carnitine/gamma-butyrobetaine antiporter.